The primary structure comprises 603 residues: Iron-sulfur clusters transporter ATM1, mitochondrial (603 aa).

Residues 20-41 (VLLAVGLLVGGKVLNVQVPFFF) traverse the membrane as a helical segment. The ABC transmembrane type-1 domain occupies 20 to 310 (VLLAVGLLVG…LGSVYRELRQ (291 aa)). Topologically, residues 42–64 (REIVDSLNVDIAATGGTVATVAG) are mitochondrial intermembrane. Residues 65–88 (TMIFAYGASRIGAVVSQELRNAVF) traverse the membrane as a helical segment. Residues 89-137 (SSVAQKAIRRVATRTFGHLLNLDLNFHLSKQTGGLTRAIDRGTKGISFL) lie on the Mitochondrial matrix side of the membrane. Residues 138–161 (LTSMVFHIVPTALEISMVCGILTY) traverse the membrane as a helical segment. Position 162 (glutamine 162) is a topological domain, mitochondrial intermembrane. The chain crosses the membrane as a helical span at residues 163–183 (FGWEFAAVTALTMSAYTAFTI). Over 184 to 249 (WTTAWRTKFR…SSIKVATSLA (66 aa)) the chain is Mitochondrial matrix. Glutathione is bound by residues 189 to 193 (RTKFR) and 252 to 255 (NSGQ). Residues 250 to 268 (FLNSGQNIIFSSALTIMMW) form a helical membrane-spanning segment. Topologically, residues 269–283 (LGAKGIVAGSLSVGD) are mitochondrial intermembrane. A helical transmembrane segment spans residues 284-305 (LVLINQLVFQLSVPLNFLGSVY). Glycine 302 is a glutathione binding site. At 306-603 (RELRQSLLDM…SEREAPVPVK (298 aa)) the chain is on the mitochondrial matrix side. Residues 345-581 (IRFDNVSFGY…NGLYTELWMA (237 aa)) enclose the ABC transporter domain. ATP is bound by residues tyrosine 354 and 378–389 (GPSGCGKSTLLR).

This sequence belongs to the ABC transporter superfamily. ABCB family. Heavy Metal importer (TC 3.A.1.210) subfamily. As to quaternary structure, homodimer.

It is found in the mitochondrion inner membrane. In terms of biological role, performs an essential function in the generation of cytoplasmic iron-sulfur proteins by mediating the ATP-dependent export of Fe/S cluster precursors synthesized by NFS1 and other mitochondrial proteins. Hydrolyzes ATP. Binds glutathione and may function by transporting a glutathione-conjugated iron-sulfur compound. The polypeptide is Iron-sulfur clusters transporter ATM1, mitochondrial (Chaetomium globosum (strain ATCC 6205 / CBS 148.51 / DSM 1962 / NBRC 6347 / NRRL 1970) (Soil fungus)).